Consider the following 137-residue polypeptide: MRLEDLQEELKKDVFIDSTKLQYEAANNVMLYSKWLNKHSSIKKEMLRIEAQKKVALKARLDYYSGRGDGDEFSMDRYEKSEMKTVLSADKDVLKVDTSLQYWGILLDFCSGALDAIKSRGFAIKHIQDMRAFEAGK.

In terms of assembly, homohexamer. Interacts with gp32.

Its function is as follows. Plays a role in viral DNA synthesis by promoting enzymatic activities of UvsX recombinase, by promoting UvsX-ssDNA filament assembly, and by helping UvsX to displace bound gp32 from ssDNA. This chain is Recombination protein uvsY (uvsY), found in Escherichia coli (Bacteriophage T4).